A 203-amino-acid chain; its full sequence is GTP cyclohydrolase-2 (203 aa).

49–53 (RIHSE) contacts GTP. Positions 54, 65, and 67 each coordinate Zn(2+). GTP is bound by residues Gln-70, 92 to 94 (EGR), and Thr-114. Catalysis depends on Asp-126, which acts as the Proton acceptor. Arg-128 serves as the catalytic Nucleophile. GTP-binding residues include Thr-149 and Lys-154.

Belongs to the GTP cyclohydrolase II family. Zn(2+) serves as cofactor.

The enzyme catalyses GTP + 4 H2O = 2,5-diamino-6-hydroxy-4-(5-phosphoribosylamino)-pyrimidine + formate + 2 phosphate + 3 H(+). It participates in cofactor biosynthesis; riboflavin biosynthesis; 5-amino-6-(D-ribitylamino)uracil from GTP: step 1/4. Its function is as follows. Catalyzes the conversion of GTP to 2,5-diamino-6-ribosylamino-4(3H)-pyrimidinone 5'-phosphate (DARP), formate and pyrophosphate. The chain is GTP cyclohydrolase-2 from Shewanella sp. (strain MR-4).